Consider the following 560-residue polypeptide: Glutamate--tRNA ligase (560 aa).

Positions 108–118 match the 'HIGH' region motif; the sequence is PNPSGPLHLGH.

Belongs to the class-I aminoacyl-tRNA synthetase family. Glutamate--tRNA ligase type 2 subfamily.

It localises to the cytoplasm. The catalysed reaction is tRNA(Glu) + L-glutamate + ATP = L-glutamyl-tRNA(Glu) + AMP + diphosphate. Functionally, catalyzes the attachment of glutamate to tRNA(Glu) in a two-step reaction: glutamate is first activated by ATP to form Glu-AMP and then transferred to the acceptor end of tRNA(Glu). This chain is Glutamate--tRNA ligase, found in Methanocorpusculum labreanum (strain ATCC 43576 / DSM 4855 / Z).